A 513-amino-acid polypeptide reads, in one-letter code: Maturase K (513 aa).

The protein belongs to the intron maturase 2 family. MatK subfamily.

It localises to the plastid. The protein resides in the chloroplast. Functionally, usually encoded in the trnK tRNA gene intron. Probably assists in splicing its own and other chloroplast group II introns. This is Maturase K from Keckiella cordifolia (Heart-leafed penstemon).